We begin with the raw amino-acid sequence, 229 residues long: DNA mismatch repair protein MutH (229 aa).

Belongs to the MutH family.

The protein resides in the cytoplasm. Sequence-specific endonuclease that cleaves unmethylated GATC sequences. It is involved in DNA mismatch repair. The protein is DNA mismatch repair protein MutH of Shigella flexneri.